The following is a 331-amino-acid chain: Ketol-acid reductoisomerase (NADP(+)) (331 aa).

Residues 2-182 form the KARI N-terminal Rossmann domain; that stretch reads AQLFYDSDAD…GGTRAGILET (181 aa). Residues 25 to 28, S51, S53, and 83 to 86 contribute to the NADP(+) site; these read YGSQ and DEFQ. Residue H108 is part of the active site. Residue G134 participates in NADP(+) binding. Residues 183 to 328 enclose the KARI C-terminal knotted domain; it reads NFKEETETDL…KGLRAMFSWL (146 aa). The Mg(2+) site is built by D191, E195, E227, and E231. S252 serves as a coordination point for substrate.

Belongs to the ketol-acid reductoisomerase family. Requires Mg(2+) as cofactor.

The enzyme catalyses (2R)-2,3-dihydroxy-3-methylbutanoate + NADP(+) = (2S)-2-acetolactate + NADPH + H(+). The catalysed reaction is (2R,3R)-2,3-dihydroxy-3-methylpentanoate + NADP(+) = (S)-2-ethyl-2-hydroxy-3-oxobutanoate + NADPH + H(+). Its pathway is amino-acid biosynthesis; L-isoleucine biosynthesis; L-isoleucine from 2-oxobutanoate: step 2/4. It functions in the pathway amino-acid biosynthesis; L-valine biosynthesis; L-valine from pyruvate: step 2/4. Functionally, involved in the biosynthesis of branched-chain amino acids (BCAA). Catalyzes an alkyl-migration followed by a ketol-acid reduction of (S)-2-acetolactate (S2AL) to yield (R)-2,3-dihydroxy-isovalerate. In the isomerase reaction, S2AL is rearranged via a Mg-dependent methyl migration to produce 3-hydroxy-3-methyl-2-ketobutyrate (HMKB). In the reductase reaction, this 2-ketoacid undergoes a metal-dependent reduction by NADPH to yield (R)-2,3-dihydroxy-isovalerate. The protein is Ketol-acid reductoisomerase (NADP(+)) of Prochlorococcus marinus (strain MIT 9303).